Reading from the N-terminus, the 367-residue chain is Pyrimidine monooxygenase RutA (367 aa).

FMN-binding positions include 49–50 (IK), Asn-115, Glu-124, 140–141 (RY), and Ser-190.

The protein belongs to the NtaA/SnaA/DszA monooxygenase family. RutA subfamily.

It catalyses the reaction uracil + FMNH2 + NADH + O2 = (Z)-3-ureidoacrylate + FMN + NAD(+) + H2O + H(+). The enzyme catalyses thymine + FMNH2 + NADH + O2 = (Z)-2-methylureidoacrylate + FMN + NAD(+) + H2O + H(+). Catalyzes the pyrimidine ring opening between N-3 and C-4 by an unusual flavin hydroperoxide-catalyzed mechanism, adding oxygen atoms in the process to yield ureidoacrylate peracid, that immediately reacts with FMN forming ureidoacrylate and FMN-N(5)-oxide. The FMN-N(5)-oxide reacts spontaneously with NADH to produce FMN. Requires the flavin reductase RutF to regenerate FMN in vivo. The polypeptide is Pyrimidine monooxygenase RutA (Yersinia enterocolitica serotype O:8 / biotype 1B (strain NCTC 13174 / 8081)).